We begin with the raw amino-acid sequence, 1100 residues long: SLIT-ROBO Rho GTPase-activating protein 2 (1100 aa).

The region spanning 19 to 324 (TQVKEIRAQL…AAENLEANSD (306 aa)) is the F-BAR domain. Coiled-coil stretches lie at residues 170 to 201 (YNMD…HEEK) and 363 to 400 (GELI…IQDM). Residues 181–203 (LKEAEKQEEKQMSRSVRHEEKQT) are compositionally biased toward basic and acidic residues. The segment at 181–210 (LKEAEKQEEKQMSRSVRHEEKQTPRSPDSL) is disordered. The Rho-GAP domain occupies 496–680 (VRKQEAIQII…TIIIHHESIF (185 aa)). In terms of domain architecture, SH3 spans 738 to 797 (SDPIEAIARFDYSGRTNRELSFKKGASLLLYSRASDDWWEGRHNGTEGLVPHQYIVVQDM). Disordered stretches follow at residues 800–835 (GYAG…TGGH) and 852–938 (EATS…PLDP). Residues 807–823 (PKADLEGSHDSVEEKVS) show a composition bias toward basic and acidic residues. Residues 919 to 932 (RKSTPTGRSKSFSN) are compositionally biased toward polar residues. Residues 945–972 (EHSSQDIEATMNTALSELRELERQSNVK) adopt a coiled-coil conformation. The disordered stretch occupies residues 986–1100 (KSGGTSEPSS…PPPTDKSCPV (115 aa)). Composition is skewed to polar residues over residues 987–997 (SGGTSEPSSPL) and 1008–1049 (SQHP…GSTF). The span at 1067-1081 (SSSAGGSPAMGSPTT) shows a compositional bias: low complexity. Pro residues predominate over residues 1082 to 1094 (TIPPTPPPPPPPT).

It localises to the cell membrane. The protein resides in the cell projection. The protein localises to the dendritic spine. Its subcellular location is the postsynaptic density. It is found in the postsynaptic cell membrane. It localises to the lamellipodium. The protein resides in the cytoplasmic vesicle. The protein localises to the phagosome. Its subcellular location is the nucleus. It is found in the cytoplasm. It localises to the cytosol. Functionally, postsynaptic RAC1 GTPase activating protein (GAP) that plays a key role in neuronal morphogenesis and migration mainly during development of the cerebral cortex. Regulates excitatory and inhibitory synapse maturation and density in cortical pyramidal neurons. Mechanistically, acts by binding and deforming membranes, thereby regulating actin dynamics to regulate cell migration and differentiation. The protein is SLIT-ROBO Rho GTPase-activating protein 2 (srgap2) of Danio rerio (Zebrafish).